Reading from the N-terminus, the 47-residue chain is PhoP/PhoQ regulator MgrB (47 aa).

A helical transmembrane segment spans residues 6 to 26; that stretch reads WVALVVVVLACLLLWAQVFNM.

It belongs to the MgrB family. In terms of assembly, may form homooligomers. Probably interacts with the periplasmic domain of PhoQ.

The protein localises to the cell inner membrane. In terms of biological role, phoP-regulated transcription is redox-sensitive, being activated when the periplasm becomes more reducing. MgrB acts between DsbA/DsbB and PhoP/PhoQ in this pathway. Represses PhoP/PhoQ signaling, possibly by binding to the periplasmic domain of PhoQ, altering its activity and that of downstream effector PhoP. The sequence is that of PhoP/PhoQ regulator MgrB from Escherichia coli O1:K1 / APEC.